The primary structure comprises 152 residues: Large ribosomal subunit protein uL15 (152 aa).

Residues 31–58 (GASCGFGMRGQKSRSGRPTRPGFEGGQM) are disordered.

The protein belongs to the universal ribosomal protein uL15 family. In terms of assembly, part of the 50S ribosomal subunit.

Its function is as follows. Binds to the 23S rRNA. The protein is Large ribosomal subunit protein uL15 of Parasynechococcus marenigrum (strain WH8102).